A 281-amino-acid chain; its full sequence is Complement C1q tumor necrosis factor-related protein 1 (281 aa).

The first 25 residues, 1 to 25, serve as a signal peptide directing secretion; it reads MGSCAQGFMLGCCLLLAITWGPILS. The disordered stretch occupies residues 35 to 68; sequence QEWEETEELPSPLDPVTRPEETREKYSPRQGEDL. The span at 51 to 66 shows a compositional bias: basic and acidic residues; the sequence is TRPEETREKYSPRQGE. The N-linked (GlcNAc...) asparagine glycan is linked to Asn-93. Positions 99-140 constitute a Collagen-like domain; the sequence is GEKGDRGDRGLQGKYGKIGSTGPRGHVGPKGQKGSIGAPGNH. The interval 107–136 is disordered; sequence RGLQGKYGKIGSTGPRGHVGPKGQKGSIGA. The C1q domain occupies 141–281; that stretch reads CKSQYAAFSV…GYLVKPASEP (141 aa).

The protein localises to the secreted. The chain is Complement C1q tumor necrosis factor-related protein 1 (C1qtnf1) from Mus musculus (Mouse).